A 425-amino-acid chain; its full sequence is Dual-specificity RNA methyltransferase RlmN (425 aa).

The Proton acceptor role is filled by Glu-136. Residues 142–381 enclose the Radical SAM core domain; that stretch reads GDDRGTLCVS…FTAGYASPVR (240 aa). Cys-149 and Cys-392 form a disulfide bridge. Residues Cys-156, Cys-160, and Cys-163 each coordinate [4Fe-4S] cluster. S-adenosyl-L-methionine contacts are provided by residues 218–219, Ser-250, 272–274, and Asn-349; these read GE and SLH. Residue Cys-392 is the S-methylcysteine intermediate of the active site.

It belongs to the radical SAM superfamily. RlmN family. It depends on [4Fe-4S] cluster as a cofactor.

It localises to the cytoplasm. The enzyme catalyses adenosine(2503) in 23S rRNA + 2 reduced [2Fe-2S]-[ferredoxin] + 2 S-adenosyl-L-methionine = 2-methyladenosine(2503) in 23S rRNA + 5'-deoxyadenosine + L-methionine + 2 oxidized [2Fe-2S]-[ferredoxin] + S-adenosyl-L-homocysteine. It catalyses the reaction adenosine(37) in tRNA + 2 reduced [2Fe-2S]-[ferredoxin] + 2 S-adenosyl-L-methionine = 2-methyladenosine(37) in tRNA + 5'-deoxyadenosine + L-methionine + 2 oxidized [2Fe-2S]-[ferredoxin] + S-adenosyl-L-homocysteine. Functionally, specifically methylates position 2 of adenine 2503 in 23S rRNA and position 2 of adenine 37 in tRNAs. m2A2503 modification seems to play a crucial role in the proofreading step occurring at the peptidyl transferase center and thus would serve to optimize ribosomal fidelity. The chain is Dual-specificity RNA methyltransferase RlmN from Methylorubrum extorquens (strain PA1) (Methylobacterium extorquens).